The following is a 334-amino-acid chain: Glutamyl-tRNA reductase (334 aa).

Residues 49–52, Ser-107, 112–114, and Gln-118 each bind substrate; these read TCNR and EDQ. The active-site Nucleophile is the Cys-50. 186 to 191 contacts NADP(+); that stretch reads GNGEMG.

It belongs to the glutamyl-tRNA reductase family. In terms of assembly, homodimer.

It carries out the reaction (S)-4-amino-5-oxopentanoate + tRNA(Glu) + NADP(+) = L-glutamyl-tRNA(Glu) + NADPH + H(+). It participates in porphyrin-containing compound metabolism; protoporphyrin-IX biosynthesis; 5-aminolevulinate from L-glutamyl-tRNA(Glu): step 1/2. In terms of biological role, catalyzes the NADPH-dependent reduction of glutamyl-tRNA(Glu) to glutamate 1-semialdehyde (GSA). In Alkaliphilus oremlandii (strain OhILAs) (Clostridium oremlandii (strain OhILAs)), this protein is Glutamyl-tRNA reductase.